A 125-amino-acid chain; its full sequence is Cu-Zn superoxide dismutase-like protein OPG175 (125 aa).

Cysteines 52 and 102 form a disulfide.

It belongs to the Cu-Zn superoxide dismutase family.

The protein localises to the virion. Its subcellular location is the host cytoplasm. Its function is as follows. Superoxide dismutase-like protein with no enzymatic activity. In Vaccinia virus (strain Western Reserve) (VACV), this protein is Cu-Zn superoxide dismutase-like protein OPG175 (OPG175).